The following is a 139-amino-acid chain: Translation initiation factor 2 subunit beta (139 aa).

Belongs to the eIF-2-beta/eIF-5 family. Heterotrimer composed of an alpha, a beta and a gamma chain.

Its function is as follows. eIF-2 functions in the early steps of protein synthesis by forming a ternary complex with GTP and initiator tRNA. The protein is Translation initiation factor 2 subunit beta of Methanococcus aeolicus (strain ATCC BAA-1280 / DSM 17508 / OCM 812 / Nankai-3).